The primary structure comprises 532 residues: MTSGRVNPNFRLEDQGIEGLGNVYYNLMEPALVQEALSRGEGNLGKGGAFLVTTGKFTGRSPKDKHVVKTASVADTIWWENNAEMSPEGFDALYADMVEHMKGRDYFVQDLVGGADPVHAINVRMVTELAWHNLFIRHLLRRPDREDLDDFIADFTIINCPSFQADPNKHNCRSETVIALNFDRKMILIGGTEYAGENKKSVFTLLNYLLPEKGIMPMHCSANHAKGNPVDTAVFFGLSGTGKTTLSADPDRVLIGDDEHGWASNGTFNFEGGCYAKTINLNPEAEPEIYATTEKFGTVIENMTFDPETFDLNFDDDSLTANMRCAYPLHYISNASASARGGHPKNIIMLTCDAFGVLPPIARLTPAQAMYHFLSGFTSKVAGTERGVTEPEPTFSTCFGAPFMPRRPEVYGNLLREKIAAHGATCWLVNTGWTGGAYGTGSRMPIKATRALLTAALDGSLANAEFRKDPNFGFDVPVAAPGVAEVLLDPRRTWDDKAAYDAQAEKLVQMFSDNFEQYLPYIDEDVKAAAIC.

Residues R60, Y194, and K200 each coordinate substrate. ATP-binding positions include K200, H219, and 237 to 245 (GLSGTGKTT). Positions 200 and 219 each coordinate Mn(2+). D258 is a binding site for Mn(2+). ATP contacts are provided by E286, R324, and T449. A substrate-binding site is contributed by R324.

The protein belongs to the phosphoenolpyruvate carboxykinase (ATP) family. Requires Mn(2+) as cofactor.

It localises to the cytoplasm. It carries out the reaction oxaloacetate + ATP = phosphoenolpyruvate + ADP + CO2. Its pathway is carbohydrate biosynthesis; gluconeogenesis. Functionally, involved in the gluconeogenesis. Catalyzes the conversion of oxaloacetate (OAA) to phosphoenolpyruvate (PEP) through direct phosphoryl transfer between the nucleoside triphosphate and OAA. The sequence is that of Phosphoenolpyruvate carboxykinase (ATP) from Ruegeria sp. (strain TM1040) (Silicibacter sp.).